We begin with the raw amino-acid sequence, 662 residues long: Translation factor GUF1, mitochondrial (662 aa).

The transit peptide at 1 to 28 (MYIHSSRTVLARYGSRTPLLRPSVLGRY) directs the protein to the mitochondrion. A tr-type G domain is found at 62 to 244 (ENYRNFSIVA…AIVDHIPAPD (183 aa)). GTP is bound by residues 71–78 (AHVDHGKS), 137–141 (DTPGH), and 191–194 (NKID).

It belongs to the TRAFAC class translation factor GTPase superfamily. Classic translation factor GTPase family. LepA subfamily.

The protein resides in the mitochondrion inner membrane. It carries out the reaction GTP + H2O = GDP + phosphate + H(+). Promotes mitochondrial protein synthesis. May act as a fidelity factor of the translation reaction, by catalyzing a one-codon backward translocation of tRNAs on improperly translocated ribosomes. Binds to mitochondrial ribosomes in a GTP-dependent manner. The chain is Translation factor GUF1, mitochondrial from Meyerozyma guilliermondii (strain ATCC 6260 / CBS 566 / DSM 6381 / JCM 1539 / NBRC 10279 / NRRL Y-324) (Yeast).